The sequence spans 107 residues: MRNSHNITLTNNDSLTEDEETTWSLPGAVVGFISWLFALAMPMLIYGSNTLFFFIYTWPFFLALMPVAVVVGIALHSLMDGKLRYSIVFTLVTVGIMFGALFMWLLG.

Residues Met1–Glu20 are Cytoplasmic-facing. The chain crosses the membrane as a helical span at residues Thr21–Met43. At Leu44 to Phe52 the chain is on the periplasmic side. A helical membrane pass occupies residues Phe53–Leu75. Over His76–Ser86 the chain is Cytoplasmic. A helical membrane pass occupies residues Ile87–Leu106. Position 107 (Gly107) is a topological domain, periplasmic.

It localises to the cell inner membrane. The polypeptide is Inner membrane protein YgbE (ygbE) (Escherichia coli (strain K12)).